The chain runs to 138 residues: uncharacterized protein (138 aa).

This is an uncharacterized protein from Acanthamoeba polyphaga mimivirus (APMV).